We begin with the raw amino-acid sequence, 333 residues long: Pollen allergen KBG 41 (333 aa).

The N-terminal stretch at methionine 1–serine 23 is a signal peptide. A run of 2 repeats spans residues threonine 309–lysine 320 and threonine 321–lysine 332. The tract at residues threonine 309–lysine 332 is 2 X 12 AA tandem repeats.

This sequence belongs to the Poa p IX/Phl p VI allergen family. As to expression, pollen.

The protein is Pollen allergen KBG 41 of Poa pratensis (Kentucky bluegrass).